We begin with the raw amino-acid sequence, 116 residues long: Class I hydrophobin 1 (116 aa).

The signal sequence occupies residues 1–19; the sequence is MLFKQAILVATTLTDLAVA. Intrachain disulfides connect cysteine 35–cysteine 95, cysteine 42–cysteine 89, cysteine 43–cysteine 76, and cysteine 96–cysteine 109. N-linked (GlcNAc...) asparagine glycans are attached at residues asparagine 44 and asparagine 100.

The protein belongs to the fungal hydrophobin family. In terms of assembly, self-assembles to form functional amyloid fibrils called rodlets. Self-assembly into fibrillar rodlets occurs spontaneously at hydrophobic:hydrophilic interfaces and the rodlets further associate laterally to form amphipathic monolayers.

It localises to the secreted. The protein resides in the cell wall. In terms of biological role, aerial growth, conidiation, and dispersal of filamentous fungi in the environment rely upon a capability of their secreting small amphipathic proteins called hydrophobins (HPBs) with low sequence identity. Class I can self-assemble into an outermost layer of rodlet bundles on aerial cell surfaces, conferring cellular hydrophobicity that supports fungal growth, development and dispersal; whereas Class II form highly ordered films at water-air interfaces through intermolecular interactions but contribute nothing to the rodlet structure. The protein is Class I hydrophobin 1 of Pleurotus ostreatus (Oyster mushroom).